Consider the following 302-residue polypeptide: Beta-1,2-mannobiose phosphorylase (302 aa).

Belongs to the glycosyl hydrolase 130 family. Monomer.

It catalyses the reaction beta-D-mannopyranosyl-(1-&gt;2)-D-mannopyranose + phosphate = alpha-D-mannose 1-phosphate + D-mannose. The protein operates within nucleotide-sugar biosynthesis; GDP-alpha-D-mannose biosynthesis. Its function is as follows. Probably involved in a salvage pathway for GDP-D-mannose biosynthesis. Catalyzes the reversible phosphorolysis of 1,2-beta-oligomannan. In phosphorolytic reactions, prefers beta-1,2-mannobiose (beta-1,2-Man2) as substrate. Produces alpha-D-mannose 1-phosphate, which is the precursor of GDP-D-mannose. The polypeptide is Beta-1,2-mannobiose phosphorylase (Thermoanaerobacter sp. (strain X514)).